We begin with the raw amino-acid sequence, 251 residues long: MKKLMAANWKMYKTAGEARTTAASLAALTADTLPDDREVVIFPQFTALSPVADALRHATGYSVGGQDVYPAAEGAYTGEISPGMLMDCGCAWVLTGHSERRHVIGESDELVGAKTAFSINAGLKVVLCIGETIEEREAGRLGEVLERQLETGLAGVKGDAVPAAIAVAYEPVWAIGTGKVAGPPEIVEAHALVRQLLVARFGEGGVAVRILYGGSVKPENAREIIALDNVDGVLVGGASLQADSFSRIILA.

8–10 (NWK) serves as a coordination point for substrate. His97 serves as the catalytic Electrophile. Catalysis depends on Glu170, which acts as the Proton acceptor. Residues Gly176, Ser215, and 236–237 (GG) contribute to the substrate site.

This sequence belongs to the triosephosphate isomerase family. As to quaternary structure, homodimer.

Its subcellular location is the cytoplasm. The enzyme catalyses D-glyceraldehyde 3-phosphate = dihydroxyacetone phosphate. It participates in carbohydrate biosynthesis; gluconeogenesis. The protein operates within carbohydrate degradation; glycolysis; D-glyceraldehyde 3-phosphate from glycerone phosphate: step 1/1. In terms of biological role, involved in the gluconeogenesis. Catalyzes stereospecifically the conversion of dihydroxyacetone phosphate (DHAP) to D-glyceraldehyde-3-phosphate (G3P). The chain is Triosephosphate isomerase from Nitratidesulfovibrio vulgaris (strain DSM 19637 / Miyazaki F) (Desulfovibrio vulgaris).